We begin with the raw amino-acid sequence, 218 residues long: Glutathione S-transferase Mu 1 (218 aa).

The region spanning 2–88 (PMILGYWDIR…YIARKHNLCG (87 aa)) is the GST N-terminal domain. Glutathione contacts are provided by residues 7-8 (YW), 43-46 (RSQW), K50, 59-60 (NL), and 72-73 (QS). One can recognise a GST C-terminal domain in the interval 90 to 208 (TEEEMIRVDI…KSSRFLPGPL (119 aa)). Y116 contributes to the substrate binding site.

Belongs to the GST superfamily. Mu family. In terms of assembly, homodimer.

The protein resides in the cytoplasm. It carries out the reaction RX + glutathione = an S-substituted glutathione + a halide anion + H(+). It catalyses the reaction prostaglandin A2 + glutathione = prostaglandin A2-S-(R)-glutathione. The catalysed reaction is prostaglandin J2 + glutathione = prostaglandin J2-S-(R)-glutathione. The enzyme catalyses prostaglandin J2 + glutathione = prostaglandin J2-S-(S)-glutathione. It carries out the reaction prostaglandin A2 + glutathione = prostaglandin A2-S-(S)-glutathione. It catalyses the reaction 11(S)-hydroxy-14(S),15(S)-epoxy-(5Z,8Z,12E)-eicosatrienoate + glutathione = (11S,15S)-dihydroxy-14(R)-S-glutathionyl-(5Z,8Z,12E)-eicosatrienoate. Conjugation of reduced glutathione to a wide number of exogenous and endogenous hydrophobic electrophiles. Protects against the thiol-mediated metal-catalyzed oxidative inactivation of enzymes. Involved in the formation of glutathione conjugates of both prostaglandin A2 (PGA2) and prostaglandin J2 (PGJ2). Participates in the formation of novel hepoxilin regioisomers. The sequence is that of Glutathione S-transferase Mu 1 (GSTM1) from Bos taurus (Bovine).